The primary structure comprises 255 residues: MSDIGNFVSRIYESKLLEEIKKHPVPGHLGIITDGNRRYARSIGISENEGHVKGKEKLEEVLNWSMEVGIHMVTVYAFSTENFKRKSDEVNFLFNLINDAFIDLLNDERVYKNGIRVKVIGDISKLPDYLKETIKRVEGETNKFKNFRFNLAIGYGGRQEIIDAIKKIGQDILNGKIKVDNINEEMFRSYLYDKTLPDPDLILRTSGEERISNFLLWQSAYSELYFADVNWPELRKIDFLRAIYSYQNRKRRFGE.

Asp34 is an active-site residue. Asp34 provides a ligand contact to Mg(2+). Residues 35 to 38 (GNRR), His51, and 79 to 81 (STE) contribute to the substrate site. The active-site Proton acceptor is the Asn82. Residues Phe83, Arg85, Arg204, and 210–212 (RIS) each bind substrate. Glu223 contacts Mg(2+).

The protein belongs to the UPP synthase family. Homodimer. Mg(2+) is required as a cofactor.

The catalysed reaction is geranylgeranyl diphosphate + 7 isopentenyl diphosphate = tri-trans,hepta-cis-undecaprenyl diphosphate + 7 diphosphate. Catalyzes the sequential condensation of isopentenyl diphosphate (IPP) with geranylgeranyl diphosphate (GGPP) to yield (2Z,6Z,10Z,14Z,18Z,22Z,26Z,30E,34E,38E)-undecaprenyl diphosphate (tritrans,heptacis-UPP). It is probably the precursor of glycosyl carrier lipids. In Picrophilus torridus (strain ATCC 700027 / DSM 9790 / JCM 10055 / NBRC 100828 / KAW 2/3), this protein is Tritrans,polycis-undecaprenyl-diphosphate synthase (geranylgeranyl-diphosphate specific).